Reading from the N-terminus, the 444-residue chain is Nuclear distribution protein PAC1 (444 aa).

Positions 59–87 (TAIARLQRRIMSLEQNIRDLREASIEMNA) form a coiled coil. WD repeat units follow at residues 113-152 (TLES…LPLA), 156-199 (AHTR…KLLR), 204-251 (HEHV…CLKS), 254-293 (PHSD…SVGL), 307-347 (SLQD…RLPQ), 367-406 (GHDS…KKWN), and 408-444 (IHQG…IFMQ).

It belongs to the WD repeat LIS1/nudF family. Self-associates. Interacts with NDL1 and dynein.

It localises to the cytoplasm. Its subcellular location is the cytoskeleton. The protein localises to the spindle pole. Its function is as follows. Positively regulates the activity of the minus-end directed microtubule motor protein dynein. Plays a central role in positioning the mitotic spindle at the bud neck during cell division. Targets cytoplasmic dynein to microtubule plus ends, thereby promoting dynein-mediated microtubule sliding along the bud cortex and consequently the movement of the mitotic spindle to the bud neck. The polypeptide is Nuclear distribution protein PAC1 (Zygosaccharomyces rouxii (strain ATCC 2623 / CBS 732 / NBRC 1130 / NCYC 568 / NRRL Y-229)).